The sequence spans 450 residues: Probable glycine dehydrogenase (decarboxylating) subunit 1 (450 aa).

The protein belongs to the GcvP family. N-terminal subunit subfamily. In terms of assembly, the glycine cleavage system is composed of four proteins: P, T, L and H. In this organism, the P 'protein' is a heterodimer of two subunits.

The enzyme catalyses N(6)-[(R)-lipoyl]-L-lysyl-[glycine-cleavage complex H protein] + glycine + H(+) = N(6)-[(R)-S(8)-aminomethyldihydrolipoyl]-L-lysyl-[glycine-cleavage complex H protein] + CO2. Its function is as follows. The glycine cleavage system catalyzes the degradation of glycine. The P protein binds the alpha-amino group of glycine through its pyridoxal phosphate cofactor; CO(2) is released and the remaining methylamine moiety is then transferred to the lipoamide cofactor of the H protein. In Desulfotalea psychrophila (strain LSv54 / DSM 12343), this protein is Probable glycine dehydrogenase (decarboxylating) subunit 1.